Consider the following 705-residue polypeptide: Elongation factor G (705 aa).

Residues 8-294 (ELCRNFGIMA…SVIDYLPSPL (287 aa)) enclose the tr-type G domain. Residues 17-24 (AHIDAGKT), 92-96 (DTPGH), and 146-149 (NKMD) contribute to the GTP site.

It belongs to the TRAFAC class translation factor GTPase superfamily. Classic translation factor GTPase family. EF-G/EF-2 subfamily.

The protein localises to the cytoplasm. In terms of biological role, catalyzes the GTP-dependent ribosomal translocation step during translation elongation. During this step, the ribosome changes from the pre-translocational (PRE) to the post-translocational (POST) state as the newly formed A-site-bound peptidyl-tRNA and P-site-bound deacylated tRNA move to the P and E sites, respectively. Catalyzes the coordinated movement of the two tRNA molecules, the mRNA and conformational changes in the ribosome. In Cereibacter sphaeroides (strain ATCC 17023 / DSM 158 / JCM 6121 / CCUG 31486 / LMG 2827 / NBRC 12203 / NCIMB 8253 / ATH 2.4.1.) (Rhodobacter sphaeroides), this protein is Elongation factor G.